Here is a 772-residue protein sequence, read N- to C-terminus: Glucocorticoid receptor (772 aa).

Over residues 1 to 15 (MDSKESLSPPGREEV) the composition is skewed to basic and acidic residues. Positions 1–22 (MDSKESLSPPGREEVPSSVLRP) are disordered. Residues 1–415 (MDSKESLSPP…TTAAGPPPKL (415 aa)) form a modulating region. Arg25 bears the Omega-N-methylarginine mark. The interval 39–82 (APVRVPASSPSLAPAAQPDSKQQRLAVDFPKGSASNAQQPDLSR) is disordered. Low complexity predominate over residues 44–58 (PASSPSLAPAAQPDS). A phosphoserine mark is found at Ser47, Ser115, Ser136, and Ser143. Residues 132 to 186 (NRSASGADNPRSTAPAAGSAAPTEGFPKTHSDLASERQNPKGQTGGSAGSAKLHP) are disordered. Positions 143–156 (STAPAAGSAAPTEG) are enriched in low complexity. Residues 158–170 (PKTHSDLASERQN) are compositionally biased toward basic and acidic residues. Phosphoserine occurs at positions 203, 211, and 226. A Glycyl lysine isopeptide (Lys-Gly) (interchain with G-Cter in SUMO2) cross-link involves residue Lys258. Glycyl lysine isopeptide (Lys-Gly) (interchain with G-Cter in SUMO); alternate cross-links involve residues Lys277 and Lys293. Glycyl lysine isopeptide (Lys-Gly) (interchain with G-Cter in SUMO2); alternate cross-links involve residues Lys277 and Lys293. Phosphoserine is present on residues Ser307 and Ser400. Lys414 is covalently cross-linked (Glycyl lysine isopeptide (Lys-Gly) (interchain with G-Cter in ubiquitin)). NR C4-type zinc fingers lie at residues 416 to 436 (CLVCSDEASGCHYGVLTCGSC) and 452 to 476 (CAGRNDCIIDKIRRKNCPACRYRKC). The segment at residues 416–481 (CLVCSDEASG…RYRKCLQAGM (66 aa)) is a DNA-binding region (nuclear receptor). N6-acetyllysine is present on residues Lys475, Lys487, Lys489, and Lys490. An interaction with CLOCK region spans residues 480–772 (GMNLEARKTK…NIKKLLFHQK (293 aa)). Residues 482–518 (NLEARKTKKKIKGIQQTSTGVSQETSENPSNRTVVPA) form a hinge region. A disordered region spans residues 494-513 (GIQQTSTGVSQETSENPSNR). The segment covering 499–513 (STGVSQETSENPSNR) has biased composition (polar residues). An NR LBD domain is found at 519-753 (ALPQLTPTLV…FPEMLAEIIT (235 aa)). The segment at 527-692 (LVSLLEVIEP…EIRMTYIKEL (166 aa)) is interaction with CRY1. Residue Lys698 forms a Glycyl lysine isopeptide (Lys-Gly) (interchain with G-Cter in SUMO) linkage.

Belongs to the nuclear hormone receptor family. NR3 subfamily. Heteromultimeric cytoplasmic complex with HSP90AA1, HSPA1A/HSPA1B, and FKBP5 or another immunophilin such as PPID, STIP1, or the immunophilin homolog PPP5C. Upon ligand binding FKBP5 dissociates from the complex and FKBP4 takes its place, thereby linking the complex to dynein and mediating transport to the nucleus, where the complex dissociates. Probably forms a complex composed of chaperones HSP90 and HSP70, co-chaperones CDC37, PPP5C, TSC1 and client protein TSC2, CDK4, AKT, RAF1 and NR3C1; this complex does not contain co-chaperones STIP1/HOP and PTGES3/p23. Directly interacts with UNC45A. Binds to DNA as a homodimer, and as heterodimer with NR3C2 or the retinoid X receptor. Binds STAT5A and STAT5B homodimers and heterodimers. Interacts with NRIP1, POU2F1, POU2F2 and TRIM28. Interacts with several coactivator complexes, including the SMARCA4 complex, CREBBP/EP300, TADA2L (Ada complex) and p160 coactivators such as NCOA2 and NCOA6. Interaction with BAG1 inhibits transactivation. Interacts with HEXIM1 and TGFB1I1. Interacts with NCOA1. Interacts with NCOA3, SMARCA4, SMARCC1, SMARCD1, and SMARCE1. Interacts with CLOCK, CRY1 and CRY2 in a ligand-dependent fashion. Interacts with CIART. Interacts with RWDD3. Interacts with UBE2I/UBC9 and this interaction is enhanced in the presence of RWDD3. Interacts with GRIP1. Interacts with NR4A3 (via nuclear receptor DNA-binding domain), represses transcription activity of NR4A3 on the POMC promoter Nur response element (NurRE). Directly interacts with PNRC2 to attract and form a complex with UPF1 and DCP1A; the interaction leads to rapid mRNA degradation. Interacts with GSK3B. Interacts with FNIP1 and FNIP2. Interacts (via C-terminus) with HNRNPU (via C-terminus). Interacts with MCM3AP. Interacts (via domain NR LBD) with HSP90AA1 and HSP90AB1. In the absence of hormonal ligand, interacts with TACC1. Interacts (via NR LBD domain) with ZNF764 (via KRAB domain); the interaction regulates transcription factor activity of NR3C1 by directing its actions toward certain biologic pathways. Post-translationally, acetylation by CLOCK reduces its binding to glucocorticoid response elements and its transcriptional activity. Increased proteasome-mediated degradation in response to glucocorticoids. In terms of processing, phosphorylated in the absence of hormone; becomes hyperphosphorylated in the presence of glucocorticoid. The Ser-203, Ser-226 and Ser-399-phosphorylated forms are mainly cytoplasmic, and the Ser-211-phosphorylated form is nuclear. Phosphorylation at Ser-211 increases transcriptional activity. Phosphorylation at Ser-203, Ser-226 and Ser-399 decreases signaling capacity. Phosphorylation at Ser-399 may protect from glucocorticoid-induced apoptosis. Phosphorylation at Ser-203 and Ser-211 is not required in regulation of chromosome segregation. May be dephosphorylated by PPP5C, attenuates NR3C1 action. Post-translationally, ubiquitinated by UBR5, leading to its degradation: UBR5 specifically recognizes and binds ligand-bound NR3C1 when it is not associated with coactivators (NCOAs). In presence of NCOAs, the UBR5-degron is not accessible, preventing its ubiquitination and degradation. Sumoylation at Lys-277 and Lys-293 negatively regulates its transcriptional activity. Sumoylation at Lys-698 positively regulates its transcriptional activity in the presence of RWDD3. Sumoylation at Lys-277 and Lys-293 is dispensable whereas sumoylation at Lys-698 is critical for the stimulatory effect of RWDD3 on its transcriptional activity. Heat shock increases sumoylation in a RWDD3-dependent manner.

It is found in the cytoplasm. The protein localises to the nucleus. It localises to the mitochondrion. Its subcellular location is the cytoskeleton. The protein resides in the spindle. It is found in the microtubule organizing center. The protein localises to the centrosome. It localises to the chromosome. Its subcellular location is the nucleoplasm. Functionally, receptor for glucocorticoids (GC). Has a dual mode of action: as a transcription factor that binds to glucocorticoid response elements (GRE), both for nuclear and mitochondrial DNA, and as a modulator of other transcription factors. Affects inflammatory responses, cellular proliferation and differentiation in target tissues. Involved in chromatin remodeling. Plays a role in rapid mRNA degradation by binding to the 5' UTR of target mRNAs and interacting with PNRC2 in a ligand-dependent manner which recruits the RNA helicase UPF1 and the mRNA-decapping enzyme DCP1A, leading to RNA decay. Could act as a coactivator for STAT5-dependent transcription upon growth hormone (GH) stimulation and could reveal an essential role of hepatic GR in the control of body growth. Mediates glucocorticoid-induced apoptosis. Promotes accurate chromosome segregation during mitosis. May act as a tumor suppressor. May play a negative role in adipogenesis through the regulation of lipolytic and antilipogenic gene expression. In Oryctolagus cuniculus (Rabbit), this protein is Glucocorticoid receptor (NR3C1).